The following is a 535-amino-acid chain: Cytochrome P450 monooxygenase claP (535 aa).

2 consecutive transmembrane segments (helical) span residues 7–27 and 225–245; these read IGTL…KLVG and YFSM…KLPT. Residue C472 participates in heme binding.

It belongs to the cytochrome P450 family. It depends on heme as a cofactor.

The protein resides in the membrane. The protein operates within secondary metabolite biosynthesis; terpenoid biosynthesis. Cytochrome P450 monooxygenase; part of the gene cluster that mediates the biosynthesis of clavilactone A, a meroterpenoid that features a unique benzo-fused ten-membered carbocyclic ring unit with an alpha,beta-epoxy-gamma-lactone moiety, forming an intriguing 10/5/3 tricyclic nested skeleton. Cytochrome P450 monooxygenases claO, claP, claQ, claU, and claW are close orthologs, suggesting that a redundant function or pseudogenes are present in the cla cluster. These monoxygenases are not involved in clavilactone A biosynthesis nor its modification. ClaR, ClaS and ClaT are sufficient to produce clavilactone A. The biosynthesis begins with the prenyltransferase claS that transfers geranyl pyrophosphate (GPP) to hydroquinone to produces geranylhydroquinone. The cytochrome P450 monooxygenase claR then catalyzes the diradical coupling reaction between the intramolecular hydroquinone and allyl moieties to form the benzo-fused ten-membered carbocyclic ring unit of wigantol. Finally the cytochrome P450 monooxygenase claT exquisitely and stereoselectively assembles the alpha,beta-epoxy-gamma-lactone moiety, producing clavilactone A via arnebinol A. The protein is Cytochrome P450 monooxygenase claP of Ampulloclitocybe clavipes (Club foot).